The primary structure comprises 855 residues: Beta-mannosidase B (855 aa).

An N-linked (GlcNAc...) asparagine glycan is attached at asparagine 98. Glutamate 430 acts as the Proton donor in catalysis. N-linked (GlcNAc...) asparagine glycosylation is found at asparagine 693 and asparagine 730.

It belongs to the glycosyl hydrolase 2 family. Beta-mannosidase B subfamily. In terms of assembly, homodimer.

Its subcellular location is the secreted. It catalyses the reaction Hydrolysis of terminal, non-reducing beta-D-mannose residues in beta-D-mannosides.. It participates in glycan metabolism; N-glycan degradation. Its function is as follows. Exoglycosidase that cleaves the single beta-linked mannose residue from the non-reducing end of beta-mannosidic oligosaccharides of various complexity and length. Prefers mannobiose over mannotriose. Is also severely restricted by galactosyl substitutions at the +1 subsite. Has no activity against polymeric mannan. The polypeptide is Beta-mannosidase B (man9) (Thermothelomyces thermophilus (Myceliophthora thermophila)).